A 256-amino-acid polypeptide reads, in one-letter code: Type III pantothenate kinase (256 aa).

6–13 (DVGNSHIY) contacts ATP. Residues tyrosine 99 and 106 to 109 (GADR) contribute to the substrate site. The Proton acceptor role is filled by aspartate 108. Aspartate 129 serves as a coordination point for K(+). Threonine 132 serves as a coordination point for ATP. Residue threonine 184 coordinates substrate.

The protein belongs to the type III pantothenate kinase family. In terms of assembly, homodimer. NH4(+) serves as cofactor. K(+) is required as a cofactor.

It is found in the cytoplasm. It carries out the reaction (R)-pantothenate + ATP = (R)-4'-phosphopantothenate + ADP + H(+). It participates in cofactor biosynthesis; coenzyme A biosynthesis; CoA from (R)-pantothenate: step 1/5. In terms of biological role, catalyzes the phosphorylation of pantothenate (Pan), the first step in CoA biosynthesis. The sequence is that of Type III pantothenate kinase from Legionella pneumophila (strain Paris).